The primary structure comprises 235 residues: Segregation and condensation protein A (235 aa).

The protein belongs to the ScpA family. Component of a cohesin-like complex composed of ScpA, ScpB and the Smc homodimer, in which ScpA and ScpB bind to the head domain of Smc. The presence of the three proteins is required for the association of the complex with DNA.

It is found in the cytoplasm. Participates in chromosomal partition during cell division. May act via the formation of a condensin-like complex containing Smc and ScpB that pull DNA away from mid-cell into both cell halves. The polypeptide is Segregation and condensation protein A (Streptococcus equi subsp. zooepidemicus (strain MGCS10565)).